A 233-amino-acid chain; its full sequence is MAEDTYEEECDYLFKAVLIGDSAVGKSNLLSRFSKDEFRFDSKPTIGVEFAYRNVHVGDKIIKAQIWDTAGQERFRAITSSYYRGALGALLIYDITRRTTFDNIKKWLFELRDFANPETVVVLVGNKSDLRQSREVEEDEGKTLAESEGLYFLETSALENVNVEEAFLVMIGRIHEVVTQRIASENKSNGAATPHINGNGNGTVLPVGKEIVNIHEVTATQPLLSSSSNCCFK.

Glycine 20–serine 27 provides a ligand contact to GTP. The Effector region signature appears at serine 42–phenylalanine 50. Residues aspartate 68–glutamine 72, asparagine 126–aspartate 129, and serine 156–alanine 157 contribute to the GTP site. 2 S-geranylgeranyl cysteine lipidation sites follow: cysteine 230 and cysteine 231.

It belongs to the small GTPase superfamily. Rab family.

The protein resides in the cell membrane. Intracellular vesicle trafficking and protein transport. In Arabidopsis thaliana (Mouse-ear cress), this protein is Ras-related protein RABA6a (RABA6A).